The sequence spans 900 residues: Alanine--tRNA ligase (900 aa).

Zn(2+) contacts are provided by H604, H608, C708, and H712.

It belongs to the class-II aminoacyl-tRNA synthetase family. Zn(2+) is required as a cofactor.

The protein resides in the cytoplasm. It carries out the reaction tRNA(Ala) + L-alanine + ATP = L-alanyl-tRNA(Ala) + AMP + diphosphate. Functionally, catalyzes the attachment of alanine to tRNA(Ala) in a two-step reaction: alanine is first activated by ATP to form Ala-AMP and then transferred to the acceptor end of tRNA(Ala). Also edits incorrectly charged Ser-tRNA(Ala) and Gly-tRNA(Ala) via its editing domain. This chain is Alanine--tRNA ligase, found in Saccharolobus islandicus (strain L.S.2.15 / Lassen #1) (Sulfolobus islandicus).